We begin with the raw amino-acid sequence, 102 residues long: Envelope protein US9 (102 aa).

At 1–75 (MAGQNTMEGE…KIYHRKKFCY (75 aa)) the chain is on the intravirion side. The short motif at 14–15 (LL) is the Di-leucine internalization motif element. The segment at 41 to 55 (EKCYYSDSENETADE) is acidic. Phosphoserine; by host CK2 occurs at positions 46 and 48. A helical; Signal-anchor for type II membrane protein transmembrane segment spans residues 76-96 (ITLIIVFVFAMTGAAFALGYI). Over 97–102 (TSQFVG) the chain is Virion surface.

The protein belongs to the alphaherpesvirinae envelope protein US9 family. Post-translationally, phosphorylated on serines within the acidic cluster, possibly by host CK2. Phosphorylation determines whether endocytosed viral US9 traffics to the trans-Golgi network or recycles to the cell membrane.

Its subcellular location is the virion membrane. The protein resides in the host Golgi apparatus membrane. It is found in the host Golgi apparatus. The protein localises to the host trans-Golgi network. It localises to the host cell membrane. Essential for the anterograde spread of the infection throughout the host nervous system. Together with the gE/gI heterodimer, US9 is involved in the sorting and transport of viral structural components toward axon tips. The sequence is that of Envelope protein US9 from Varicella-zoster virus (strain Dumas) (HHV-3).